The primary structure comprises 99 residues: UPF0125 protein PM0166 (99 aa).

This sequence belongs to the UPF0125 (RnfH) family.

In Pasteurella multocida (strain Pm70), this protein is UPF0125 protein PM0166.